Here is a 1026-residue protein sequence, read N- to C-terminus: Glutactin (1026 aa).

An N-terminal signal peptide occupies residues 1 to 17 (MKPLLLVLALCGAQVHA). Residues tyrosine 26 and tyrosine 29 each carry the sulfotyrosine modification. Residue asparagine 115 is glycosylated (N-linked (GlcNAc...) asparagine). Cysteine 123 and cysteine 145 are oxidised to a cystine. Tyrosine 182 is subject to Sulfotyrosine. Cysteine 298 and cysteine 316 are disulfide-bonded. N-linked (GlcNAc...) asparagine glycosylation is found at asparagine 368 and asparagine 402. At tyrosine 559 the chain carries Sulfotyrosine. The disordered stretch occupies residues 601–641 (PITTTTTTTTTTTTTSRPYAYNPYANWQNRPSQQHPNWHPA). Residues 603–615 (TTTTTTTTTTTTT) show a composition bias toward low complexity. Residues 625–636 (ANWQNRPSQQHP) show a composition bias toward polar residues. Sulfotyrosine is present on tyrosine 645. 2 disordered regions span residues 659-695 (EREQ…REQE) and 723-1026 (EREQ…NSRN). Residues 723-752 (EREQYEREQQEREQREREELERQQREREQQ) show a composition bias toward basic and acidic residues. The residue at position 727 (tyrosine 727) is a Sulfotyrosine. An N-linked (GlcNAc...) asparagine glycan is attached at asparagine 810. Over residues 811-854 (FSEEDREQQQQEQLRREQQEQQEREYQLQLEREQQEREQQERGQ) the composition is skewed to basic and acidic residues. Sulfotyrosine occurs at positions 836, 862, 865, 868, 922, and 928. Residues 855–866 (QEPGPEEYPSYE) are compositionally biased toward low complexity. A compositionally biased stretch (basic and acidic residues) spans 867–893 (EYSRALQEKNAERDRIYAEEQERERQQ). Residues 923–944 (DGDRSYAEEQEREQQRRDQVEQ) are compositionally biased toward basic and acidic residues. Residues 945–969 (EREEQPDEDQGEEYERSPDEEEAAE) are compositionally biased toward acidic residues. Sulfotyrosine is present on residues tyrosine 981, tyrosine 984, and tyrosine 1006. A compositionally biased stretch (basic and acidic residues) spans 1002–1026 (EEERYRAQQEEEDRIQAERERNSRN).

In the N-terminal section; belongs to the type-B carboxylesterase/lipase family. In terms of processing, extensively O-glycosylated and also N-glycosylated. About four tyrosines are sulfated.

It is found in the secreted. The protein resides in the extracellular space. It localises to the extracellular matrix. The protein localises to the basement membrane. Its function is as follows. Not known. Binds calcium ions. This chain is Glutactin (Glt), found in Drosophila melanogaster (Fruit fly).